The chain runs to 124 residues: Large ribosomal subunit protein uL18 (124 aa).

Belongs to the universal ribosomal protein uL18 family. Part of the 50S ribosomal subunit; part of the 5S rRNA/L5/L18/L25 subcomplex. Contacts the 5S and 23S rRNAs.

Its function is as follows. This is one of the proteins that bind and probably mediate the attachment of the 5S RNA into the large ribosomal subunit, where it forms part of the central protuberance. This chain is Large ribosomal subunit protein uL18, found in Frankia casuarinae (strain DSM 45818 / CECT 9043 / HFP020203 / CcI3).